We begin with the raw amino-acid sequence, 301 residues long: MLLDTASLYFRAYFGVPDSVKAPDGTPVNAVRGLLDFIDRLVKDHRPEHLVACMDADWRPHWRVELIPSYKAHRVAEERPAGPDAEEVPDTLSPQVPVIEAVLDALGIARVGVAGYEADDVIGTYTARATGPVDIVTGDRDLYQLVDDARGVRVLYPVKGVGTLNLVDEAALREKYGVDGAGYADLALLRGDPSDGLPGVPGIGEKTAAKLLAEFGDLAGIQAAVDDPKARLTPTQRKRLTEAGPYLAVAPKVVRVAADVPLPDTGTALPHGPRDAAALEALAARWGLGGSLQRLLTTLTA.

A 5'-3' exonuclease domain is found at 182–264; sequence GYADLALLRG…RVAADVPLPD (83 aa).

In terms of biological role, 5'-3' exonuclease acting preferentially on double-stranded DNA. This Streptomyces coelicolor (strain ATCC BAA-471 / A3(2) / M145) protein is 5'-3' exonuclease.